The chain runs to 512 residues: UDP-N-acetylmuramate--L-alanine ligase (512 aa).

Residue 132 to 138 (GAHGKTT) coordinates ATP.

The protein belongs to the MurCDEF family.

It is found in the cytoplasm. The catalysed reaction is UDP-N-acetyl-alpha-D-muramate + L-alanine + ATP = UDP-N-acetyl-alpha-D-muramoyl-L-alanine + ADP + phosphate + H(+). It participates in cell wall biogenesis; peptidoglycan biosynthesis. Its function is as follows. Cell wall formation. The sequence is that of UDP-N-acetylmuramate--L-alanine ligase from Bifidobacterium longum (strain DJO10A).